Consider the following 687-residue polypeptide: Transketolase 2 (687 aa).

Residue histidine 47 coordinates substrate. Thiamine diphosphate-binding positions include histidine 87 and 135 to 137; that span reads GPL. Aspartate 176 contacts Mg(2+). The thiamine diphosphate site is built by glycine 177 and asparagine 206. Mg(2+) is bound by residues asparagine 206 and isoleucine 208. The substrate site is built by histidine 282, arginine 379, and serine 406. Residue histidine 282 coordinates thiamine diphosphate. Glutamate 432 serves as the catalytic Proton donor. Thiamine diphosphate is bound at residue phenylalanine 458. 4 residues coordinate substrate: histidine 482, aspartate 490, histidine 494, and arginine 541.

The protein belongs to the transketolase family. Mg(2+) serves as cofactor. Thiamine diphosphate is required as a cofactor.

It catalyses the reaction D-sedoheptulose 7-phosphate + D-glyceraldehyde 3-phosphate = aldehydo-D-ribose 5-phosphate + D-xylulose 5-phosphate. Activity is increased sixfold following autotrophic growth on methanol compared with that of heterotrophically grown cells. Catalyzes the transfer of a two-carbon ketol group from a ketose donor to an aldose acceptor, via a covalent intermediate with the cofactor thiamine pyrophosphate. This is Transketolase 2 from Xanthobacter flavus.